Here is a 317-residue protein sequence, read N- to C-terminus: MDATLNIAIAAEFELSEKIVERLEQSALEISKVSIVEIIPFEEEQNIRFRNKGVEQLSPNEVEWADFNYVFFAGKLEQVSHIAQAAEQGCIVIDMLGVCSALSDVPVVVPTVNESQLLELRQRNIVSLPDPQVSQLALTLAPILQETNLNQVFVTSLLPASYTDAETVTKLAGQTARLLNGIPLDEEETRLAFDVYPYQTPNLSNQLQRIFPQLDRATFHAIQVPVFYGLAQKVTALSDYDFDYQPQNSELIALEETLITPVLNGEQENGEESVKLHLSQISAVENGVEFWSVADEQRFNLALLSVKLLEGIYQQGY.

This sequence belongs to the aspartate-semialdehyde dehydrogenase family.

In Haemophilus influenzae (strain ATCC 51907 / DSM 11121 / KW20 / Rd), this protein is USG-1 protein homolog (usg).